Here is a 286-residue protein sequence, read N- to C-terminus: NAD(P)H azoreductase (286 aa).

NADP(+) is bound by residues 6 to 11 (GGTGTI), R31, and 136 to 141 (GFFMQN).

The protein belongs to the NmrA-type oxidoreductase family. Azoreductase type 3 subfamily. Monomer.

Functionally, catalyzes the reductive cleavage of azo bond in aromatic azo compounds to the corresponding amines. Uses preferentially NADPH rather than NADH as an electron donor for its activity. The enzyme reductively cleaved Orange II and carboxy-Orange II, and can also reduce several sulfonated structural analogs, which carry a hydroxy group in the 2 position of the naphthol ring. The protein is NAD(P)H azoreductase (azoB) of Xenophilus azovorans.